The primary structure comprises 446 residues: Phosphoglucosamine mutase (446 aa).

Residue Ser102 is the Phosphoserine intermediate of the active site. Ser102, Asp241, Asp243, and Asp245 together coordinate Mg(2+). Position 102 is a phosphoserine (Ser102).

Belongs to the phosphohexose mutase family. The cofactor is Mg(2+). Post-translationally, activated by phosphorylation.

It carries out the reaction alpha-D-glucosamine 1-phosphate = D-glucosamine 6-phosphate. Its function is as follows. Catalyzes the conversion of glucosamine-6-phosphate to glucosamine-1-phosphate. The polypeptide is Phosphoglucosamine mutase (Yersinia pseudotuberculosis serotype O:1b (strain IP 31758)).